A 73-amino-acid chain; its full sequence is Toxin Td5 (73 aa).

The signal sequence occupies residues 1–7 (IGMVVEC). One can recognise an LCN-type CS-alpha/beta domain in the interval 8 to 70 (KDGYLVGNDG…IWNSATNRCR (63 aa)). 4 disulfides stabilise this stretch: C18–C69, C22–C44, C30–C50, and C34–C52. R70 bears the Arginine amide mark.

Belongs to the long (4 C-C) scorpion toxin superfamily. Sodium channel inhibitor family. Beta subfamily. In terms of tissue distribution, expressed by the venom gland.

The protein resides in the secreted. Its function is as follows. Beta toxins bind voltage-independently at site-4 of sodium channels (Nav) and shift the voltage of activation toward more negative potentials thereby affecting sodium channel activation and promoting spontaneous and repetitive firing. The polypeptide is Toxin Td5 (Tityus discrepans (Venezuelan scorpion)).